The primary structure comprises 792 residues: Phenylalanine--tRNA ligase beta subunit (792 aa).

Positions 39–147 constitute a tRNA-binding domain; the sequence is GESLGQVVVA…DDAPVGQALA (109 aa). The 76-residue stretch at 400 to 475 folds into the B5 domain; that stretch reads PQPARIRLRR…RIHGYDRVPT (76 aa). The Mg(2+) site is built by D453, D459, E462, and E463. The FDX-ACB domain maps to 698–791; it reads SRFPSVRRDL…IEREHRARIR (94 aa).

Belongs to the phenylalanyl-tRNA synthetase beta subunit family. Type 1 subfamily. Tetramer of two alpha and two beta subunits. Mg(2+) is required as a cofactor.

Its subcellular location is the cytoplasm. It carries out the reaction tRNA(Phe) + L-phenylalanine + ATP = L-phenylalanyl-tRNA(Phe) + AMP + diphosphate + H(+). This is Phenylalanine--tRNA ligase beta subunit from Xanthomonas euvesicatoria pv. vesicatoria (strain 85-10) (Xanthomonas campestris pv. vesicatoria).